A 61-amino-acid chain; its full sequence is Small ribosomal subunit protein uS14B (61 aa).

C24, C27, C40, and C43 together coordinate Zn(2+).

It belongs to the universal ribosomal protein uS14 family. Zinc-binding uS14 subfamily. Part of the 30S ribosomal subunit. Contacts proteins S3 and S10. It depends on Zn(2+) as a cofactor.

Its function is as follows. Binds 16S rRNA, required for the assembly of 30S particles and may also be responsible for determining the conformation of the 16S rRNA at the A site. This Streptomyces avermitilis (strain ATCC 31267 / DSM 46492 / JCM 5070 / NBRC 14893 / NCIMB 12804 / NRRL 8165 / MA-4680) protein is Small ribosomal subunit protein uS14B.